The sequence spans 215 residues: Large ribosomal subunit protein uL3 (215 aa).

The disordered stretch occupies residues 136 to 155 (GVSISHRSHGSTGQRQDPGK). Q151 is modified (N5-methylglutamine).

The protein belongs to the universal ribosomal protein uL3 family. As to quaternary structure, part of the 50S ribosomal subunit. Forms a cluster with proteins L14 and L19. Post-translationally, methylated by PrmB.

One of the primary rRNA binding proteins, it binds directly near the 3'-end of the 23S rRNA, where it nucleates assembly of the 50S subunit. This chain is Large ribosomal subunit protein uL3, found in Rickettsia rickettsii (strain Iowa).